Reading from the N-terminus, the 277-residue chain is Undecaprenyl-diphosphatase (277 aa).

Helical transmembrane passes span 85-105, 109-129, 188-208, 218-238, and 256-276; these read VNIV…AGAI, LFAP…ILWV, ATEF…VYSV, ADIP…FLCV, and YRIG…VVWA.

The protein belongs to the UppP family.

It is found in the cell inner membrane. It carries out the reaction di-trans,octa-cis-undecaprenyl diphosphate + H2O = di-trans,octa-cis-undecaprenyl phosphate + phosphate + H(+). In terms of biological role, catalyzes the dephosphorylation of undecaprenyl diphosphate (UPP). Confers resistance to bacitracin. In Herminiimonas arsenicoxydans, this protein is Undecaprenyl-diphosphatase.